Reading from the N-terminus, the 222-residue chain is MGSCGNSPSLLWLLLADIINKKKDLVYNFDYLQKIHELEMNYFDFVIEKVRLKDTDNHVKITVEKMLDVLKLLLEYTQDQNYQKEIDSCKKYLTDDNPVNPSDDLTEDMLEDDTSREIYLLEFTYGRNQCQYAYSLIQKVEIELANINTLYSTVRSMFYNTMKYIFSSIDYVEVCPENAFKLMINYYENDRNHIAHSLQRKTIKEVRPSQQAITMWFNFGIY.

Gly-2 carries N-myristoyl glycine; by host lipidation.

Belongs to the mimivirus R683/R861 family.

This is an uncharacterized protein from Acanthamoeba polyphaga mimivirus (APMV).